The sequence spans 332 residues: 2,3-diketo-L-gulonate reductase (332 aa).

H44 (proton donor) is an active-site residue. Residues 168–174, 224–225, and 304–306 contribute to the NAD(+) site; these read ITMVDMS, WK, and GHE.

It belongs to the LDH2/MDH2 oxidoreductase family. DlgD subfamily. Homodimer.

It localises to the cytoplasm. It carries out the reaction 3-dehydro-L-gulonate + NAD(+) = 2,3-dioxo-L-gulonate + NADH + H(+). The enzyme catalyses 3-dehydro-L-gulonate + NADP(+) = 2,3-dioxo-L-gulonate + NADPH + H(+). Functionally, catalyzes the reduction of 2,3-diketo-L-gulonate in the presence of NADH, to form 3-keto-L-gulonate. The chain is 2,3-diketo-L-gulonate reductase from Escherichia coli O81 (strain ED1a).